The chain runs to 402 residues: D-galactonate dehydratase family member RspA (402 aa).

Asn37 and His122 together coordinate substrate. Tyr159 acts as the Proton donor/acceptor in catalysis. Position 210 (Asp210) interacts with Mg(2+). The active-site Proton donor/acceptor is His212. Residues Glu236 and Glu262 each coordinate Mg(2+). Positions 262, 283, 312, 316, and 339 each coordinate substrate.

It belongs to the mandelate racemase/muconate lactonizing enzyme family. GalD subfamily. Mg(2+) is required as a cofactor.

The catalysed reaction is D-mannonate = 2-dehydro-3-deoxy-D-gluconate + H2O. Its function is as follows. Has low D-mannonate dehydratase activity (in vitro), suggesting that this is not a physiological substrate and that it has no significant role in D-mannonate degradation in vivo. Has no detectable activity with a panel of 70 other acid sugars (in vitro). The protein is D-galactonate dehydratase family member RspA (rspA) of Cellvibrio japonicus (strain Ueda107) (Pseudomonas fluorescens subsp. cellulosa).